The chain runs to 1306 residues: Angiotensin-converting enzyme (1306 aa).

Positions 1–28 (MGAASGRRSPPLLLPLLLLLLPPPPVIL) are cleaved as a signal peptide. Residues 29–1256 (ELDPALQPGN…GLNLEEQQAR (1228 aa)) are Extracellular-facing. Peptidase M2 domains lie at 40 to 624 (PADE…LGWP) and 643 to 1222 (VSDE…LGWP). 5 N-linked (GlcNAc...) asparagine glycosylation sites follow: N54, N74, N111, N146, and N160. C157 and C165 are joined by a disulfide. Residue Y231 coordinates chloride. N318 carries an N-linked (GlcNAc...) asparagine glycan. C359 and C377 are disulfide-bonded. H390 lines the Zn(2+) pocket. E391 functions as the Proton acceptor 1 in the catalytic mechanism. Zn(2+) contacts are provided by H394 and E418. N-linked (GlcNAc...) asparagine glycans are attached at residues N445 and N509. H520 serves as the catalytic Proton donor 1. N523 carries an N-linked (GlcNAc...) asparagine glycan. Chloride is bound at residue R529. C545 and C557 are joined by a disulfide. 4 N-linked (GlcNAc...) asparagine glycosylation sites follow: N673, N695, N714, and N760. A disulfide bond links C757 and C763. Chloride-binding residues include R791 and Y829. N-linked (GlcNAc...) asparagine glycosylation is present at N942. Cysteines 957 and 975 form a disulfide. H988 is a binding site for Zn(2+). The active-site Proton acceptor 2 is E989. Positions 992 and 1016 each coordinate Zn(2+). Residues W1090 and R1094 each coordinate chloride. H1118 acts as the Proton donor 2 in catalysis. R1127 contributes to the chloride binding site. C1143 and C1155 are joined by a disulfide. 2 N-linked (GlcNAc...) asparagine glycosylation sites follow: N1191 and N1225. Residues 1215–1256 (HGEKLGWPQYNWTPNSARLEGPFVGSGRVNFLGLNLEEQQAR) form a juxtamembrane stalk region. A helical membrane pass occupies residues 1257–1277 (VGQWVLLFLGVALLVATLGLT). The Cytoplasmic portion of the chain corresponds to 1278–1306 (QRLFSIRHHSLRRPHRGPQFGSEVELRHS). S1299 carries the post-translational modification Phosphoserine.

Belongs to the peptidase M2 family. In terms of assembly, monomer and homodimer; homodimerizes following binding to an inhibitor. Interacts with calmodulin (CALM1, CALM2 or CALM3); interaction takes place in the cytoplasmic region and regulates phosphorylation and proteolytic cleavage. Zn(2+) is required as a cofactor. Requires chloride as cofactor. Post-translationally, produced following proteolytic cleavage by secretase enzymes that cleave the transmembrane form in the juxtamembrane stalk region upstream of the transmembrane region. Cleavage can take place at different sites of the juxtamembrane stalk region. In terms of processing, phosphorylated by CK2 on Ser-1299; which allows membrane retention. Phosphorylated on tyrosine residues on its extracellular part, promoting cleavage by secretase enzymes and formation of the soluble form (Angiotensin-converting enzyme, soluble form).

Its subcellular location is the cell membrane. The protein resides in the cytoplasm. It localises to the secreted. It catalyses the reaction Release of a C-terminal dipeptide, oligopeptide-|-Xaa-Yaa, when Xaa is not Pro, and Yaa is neither Asp nor Glu. Thus, conversion of angiotensin I to angiotensin II, with increase in vasoconstrictor activity, but no action on angiotensin II.. It carries out the reaction angiotensin I + H2O = L-histidyl-L-leucine + angiotensin II. The catalysed reaction is bradykinin + H2O = L-Phe-L-Arg + bradykinin(1-7). The enzyme catalyses substance P + H2O = substance P(1-9) + L-Leu-L-Met-NH2. It catalyses the reaction substance P + H2O = substance P(1-8) + Gly-L-Leu-L-Met-NH2. It carries out the reaction substance P + H2O = L-Phe-L-Phe-Gly-L-Leu-L-Met-NH2 + substance P(1-6). The catalysed reaction is neurotensin + H2O = neurotensin(1-11) + L-isoleucyl-L-leucine. The enzyme catalyses goralatide + H2O = N-acetyl-L-seryl-L-aspartate + L-lysyl-L-proline. It catalyses the reaction Met-enkephalin + H2O = L-phenylalanyl-L-methionine + L-tyrosylglycylglycine. It carries out the reaction Leu-enkephalin + H2O = L-tyrosylglycylglycine + L-phenylalanyl-L-leucine. The catalysed reaction is Met-enkephalin-Arg-Phe + H2O = L-arginyl-L-phenylalanine + Met-enkephalin. Its activity is regulated as follows. The dipeptidyl carboxypeptidase activity is strongly activated by chloride. The dipeptidyl carboxypeptidase activity is specifically inhibited by lisinopril, captopril and enalaprilat. Functionally, dipeptidyl carboxypeptidase that removes dipeptides from the C-terminus of a variety of circulating hormones, such as angiotensin I, bradykinin or enkephalins, thereby playing a key role in the regulation of blood pressure, electrolyte homeostasis or synaptic plasticity. Composed of two similar catalytic domains, each possessing a functional active site, with different selectivity for substrates. Plays a major role in the angiotensin-renin system that regulates blood pressure and sodium retention by the kidney by converting angiotensin I to angiotensin II, resulting in an increase of the vasoconstrictor activity of angiotensin. Also able to inactivate bradykinin, a potent vasodilator, and therefore enhance the blood pressure response. Acts as a regulator of synaptic transmission by mediating cleavage of neuropeptide hormones, such as substance P, neurotensin or enkephalins. Catalyzes degradation of different enkephalin neuropeptides (Met-enkephalin, Leu-enkephalin, Met-enkephalin-Arg-Phe and possibly Met-enkephalin-Arg-Gly-Leu). Acts as a regulator of synaptic plasticity in the nucleus accumbens of the brain by mediating cleavage of Met-enkephalin-Arg-Phe, a strong ligand of Mu-type opioid receptor OPRM1, into Met-enkephalin. Met-enkephalin-Arg-Phe cleavage by ACE decreases activation of OPRM1, leading to long-term synaptic potentiation of glutamate release. Also acts as a regulator of hematopoietic stem cell differentiation by mediating degradation of hemoregulatory peptide N-acetyl-SDKP (AcSDKP). Acts as a regulator of cannabinoid signaling pathway by mediating degradation of hemopressin, an antagonist peptide of the cannabinoid receptor CNR1. Involved in amyloid-beta metabolism by catalyzing degradation of Amyloid-beta protein 40 and Amyloid-beta protein 42 peptides, thereby preventing plaque formation. Catalyzes cleavage of cholecystokinin (maturation of Cholecystokinin-8 and Cholecystokinin-5) and Gonadoliberin-1 (both maturation and degradation) hormones. Degradation of hemoregulatory peptide N-acetyl-SDKP (AcSDKP) and amyloid-beta proteins is mediated by the N-terminal catalytic domain, while angiotensin I and cholecystokinin cleavage is mediated by the C-terminal catalytic region. Soluble form that is released in blood plasma and other body fluids following proteolytic cleavage in the juxtamembrane stalk region. The sequence is that of Angiotensin-converting enzyme from Bos taurus (Bovine).